Consider the following 579-residue polypeptide: Protein downstream neighbor of son homolog (579 aa).

Disordered stretches follow at residues 1–68 (MAEL…RRNP) and 331–379 (FSQP…DESF). Residues 339–348 (DTGKKQKKPE) are compositionally biased toward basic and acidic residues. Residues 365-378 (EADEASDESDEDES) show a composition bias toward acidic residues.

The protein belongs to the DONSON family. As to quaternary structure, component of the replisome complex.

It is found in the nucleus. In terms of biological role, replisome component that maintains genome stability by protecting stalled or damaged replication forks. After the induction of replication stress, required for the stabilization of stalled replication forks, the efficient activation of the intra-S-phase and G/2M cell-cycle checkpoints and the maintenance of genome stability. The chain is Protein downstream neighbor of son homolog from Xenopus laevis (African clawed frog).